The sequence spans 94 residues: Acylphosphatase (94 aa).

In terms of domain architecture, Acylphosphatase-like spans 8 to 94; it reads HIRAWVSGKV…ETPPLGFEVC (87 aa). Catalysis depends on residues arginine 23 and asparagine 41.

It belongs to the acylphosphatase family.

The catalysed reaction is an acyl phosphate + H2O = a carboxylate + phosphate + H(+). The protein is Acylphosphatase (acyP) of Hahella chejuensis (strain KCTC 2396).